Consider the following 288-residue polypeptide: Probable aquaporin PIP1-2 (288 aa).

The segment at 1-37 (MEGKEEDVRLGANKFSERQPIGTAAQGSDDKDYKEPP) is disordered. The next 2 helical transmembrane spans lie at 57 to 77 (IAEFMATFLFLYITVLTVMGV) and 92 to 114 (IAWSFGGMIFALVYCTAGISGGH). An NPA 1 motif is present at residues 116-118 (NPA). 3 consecutive transmembrane segments (helical) span residues 135–155 (LFYMVMQCLGAICGAGVVKGF), 177–197 (GDGLGAEIVGTFILVYTVFSA), and 211–231 (ILAPLPIGFAVFLVHLATIPI). An NPA 2 motif is present at residues 237-239 (NPA). A helical transmembrane segment spans residues 259–279 (IFWVGPFIGAALAAIYHQVVI).

The protein belongs to the MIP/aquaporin (TC 1.A.8) family. PIP (TC 1.A.8.11) subfamily. As to expression, expressed in roots, leaves and anthers.

The protein localises to the cell membrane. Functionally, aquaporins facilitate the transport of water and small neutral solutes across cell membranes. This Oryza sativa subsp. japonica (Rice) protein is Probable aquaporin PIP1-2 (PIP1-2).